The chain runs to 155 residues: Ribonuclease H (155 aa).

The RNase H type-1 domain maps to 4 to 145; the sequence is DISKVVIYTD…ADKLAVQGRQ (142 aa). Residues aspartate 13, glutamate 51, aspartate 73, and aspartate 137 each contribute to the Mg(2+) site.

It belongs to the RNase H family. As to quaternary structure, monomer. Mg(2+) is required as a cofactor.

The protein resides in the cytoplasm. The catalysed reaction is Endonucleolytic cleavage to 5'-phosphomonoester.. Endonuclease that specifically degrades the RNA of RNA-DNA hybrids. In Rickettsia bellii (strain RML369-C), this protein is Ribonuclease H.